The chain runs to 230 residues: Fibrillarin-like rRNA/tRNA 2'-O-methyltransferase (230 aa).

S-adenosyl-L-methionine is bound by residues 87 to 88 (TT), 105 to 106 (EF), 130 to 131 (DA), and 150 to 153 (DVAQ).

The protein belongs to the methyltransferase superfamily. Fibrillarin family. Interacts with nop5. Component of box C/D small ribonucleoprotein (sRNP) particles that contain rpl7ae, FlpA and nop5, plus a guide RNA.

Involved in pre-rRNA and tRNA processing. Utilizes the methyl donor S-adenosyl-L-methionine to catalyze the site-specific 2'-hydroxyl methylation of ribose moieties in rRNA and tRNA. Site specificity is provided by a guide RNA that base pairs with the substrate. Methylation occurs at a characteristic distance from the sequence involved in base pairing with the guide RNA. This chain is Fibrillarin-like rRNA/tRNA 2'-O-methyltransferase, found in Methanococcus vannielii (strain ATCC 35089 / DSM 1224 / JCM 13029 / OCM 148 / SB).